The sequence spans 220 residues: CASP-like protein 4B1 (220 aa).

The Cytoplasmic portion of the chain corresponds to 1 to 74 (MAMVTTEAAA…RWRREDMLDK (74 aa)). Residues 13–56 (TTAATAAAEKPQDVEKPDYAPYNGASTTADGGTGARARRGDGGG) form a disordered region. A helical membrane pass occupies residues 75–95 (SPLALHAAAAIFAFVALVLVA). The Extracellular segment spans residues 96-109 (SNQHGDWMQFDRYQ). A helical transmembrane segment spans residues 110–127 (EYRYLLAIASLALLYSLA). Residues 128-152 (QAARHAHRMRGGVDPVSSASARLLD) are Cytoplasmic-facing. Residues 153-173 (FVGDQVVAYLLMSALSAAVPI) traverse the membrane as a helical segment. At 174–188 (TNRMRSAVVNNFTDA) the chain is on the extracellular side. Residue Asn-184 is glycosylated (N-linked (GlcNAc...) asparagine). The chain crosses the membrane as a helical span at residues 189–209 (TAAAISMAFFSFVALALSAVV). The Cytoplasmic portion of the chain corresponds to 210–220 (SGYKLSKQTYM).

It belongs to the Casparian strip membrane proteins (CASP) family. As to quaternary structure, homodimer and heterodimers.

It is found in the cell membrane. In Sorghum bicolor (Sorghum), this protein is CASP-like protein 4B1.